Reading from the N-terminus, the 259-residue chain is 5'-nucleotidase SurE (259 aa).

The a divalent metal cation site is built by Asp8, Asp9, Ser40, and Asn92.

It belongs to the SurE nucleotidase family. A divalent metal cation is required as a cofactor.

It localises to the cytoplasm. The enzyme catalyses a ribonucleoside 5'-phosphate + H2O = a ribonucleoside + phosphate. Functionally, nucleotidase that shows phosphatase activity on nucleoside 5'-monophosphates. In Xanthomonas axonopodis pv. citri (strain 306), this protein is 5'-nucleotidase SurE.